The primary structure comprises 149 residues: Transcriptional repressor NrdR (149 aa).

The segment at 3 to 34 (CPFCSHSETQVVETRISEDGDSIRRRRQCASC) is a zinc-finger region. An ATP-cone domain is found at 49–139 (PAIVKKDGRR…VYRSFEDIDE (91 aa)).

This sequence belongs to the NrdR family. Zn(2+) is required as a cofactor.

Its function is as follows. Negatively regulates transcription of bacterial ribonucleotide reductase nrd genes and operons by binding to NrdR-boxes. The polypeptide is Transcriptional repressor NrdR (Albidiferax ferrireducens (strain ATCC BAA-621 / DSM 15236 / T118) (Rhodoferax ferrireducens)).